The chain runs to 86 residues: Anti-adapter protein IraP (86 aa).

A coiled-coil region spans residues Met-1 to Met-36.

Belongs to the IraP family. As to quaternary structure, interacts with RssB.

It is found in the cytoplasm. Functionally, inhibits RpoS proteolysis by regulating RssB activity, thereby increasing the stability of the sigma stress factor RpoS especially during phosphate starvation, but also in stationary phase and during nitrogen starvation. Its effect on RpoS stability is due to its interaction with RssB, which probably blocks the interaction of RssB with RpoS, and the consequent delivery of the RssB-RpoS complex to the ClpXP protein degradation pathway. The sequence is that of Anti-adapter protein IraP from Escherichia coli O7:K1 (strain IAI39 / ExPEC).